Here is a 78-residue protein sequence, read N- to C-terminus: Acyl carrier protein (78 aa).

A Carrier domain is found at 2–77 (STIEERVKKI…EAIDYVTAHA (76 aa)). Residue S37 is modified to O-(pantetheine 4'-phosphoryl)serine.

The protein belongs to the acyl carrier protein (ACP) family. In terms of processing, 4'-phosphopantetheine is transferred from CoA to a specific serine of apo-ACP by AcpS. This modification is essential for activity because fatty acids are bound in thioester linkage to the sulfhydryl of the prosthetic group.

The protein resides in the cytoplasm. Its pathway is lipid metabolism; fatty acid biosynthesis. Carrier of the growing fatty acid chain in fatty acid biosynthesis. The sequence is that of Acyl carrier protein from Ectopseudomonas mendocina (strain ymp) (Pseudomonas mendocina).